Reading from the N-terminus, the 281-residue chain is Large ribosomal subunit protein uL2 (281 aa).

Positions Thr-223–Gly-255 are disordered.

Belongs to the universal ribosomal protein uL2 family. As to quaternary structure, part of the 50S ribosomal subunit. Forms a bridge to the 30S subunit in the 70S ribosome.

One of the primary rRNA binding proteins. Required for association of the 30S and 50S subunits to form the 70S ribosome, for tRNA binding and peptide bond formation. It has been suggested to have peptidyltransferase activity; this is somewhat controversial. Makes several contacts with the 16S rRNA in the 70S ribosome. The sequence is that of Large ribosomal subunit protein uL2 from Mycoplasma capricolum subsp. capricolum (strain California kid / ATCC 27343 / NCTC 10154).